A 337-amino-acid chain; its full sequence is Diacylglycerol O-acyltransferase 2-like protein 6 (337 aa).

2 helical membrane-spanning segments follow: residues 22-42 (MPVYVFLGAIPIIVIPYFLVF) and 102-122 (YIIASHPHGVLPYGTFINFAT).

The protein belongs to the diacylglycerol acyltransferase family.

The protein resides in the endoplasmic reticulum membrane. The catalysed reaction is 1,2-di-(9Z-octadecenoyl)-sn-glycerol + (9Z)-octadecenoyl-CoA = 1,2,3-tri-(9Z-octadecenoyl)-glycerol + CoA. In terms of biological role, diglyceride acyltransferase that uses fatty acyl-CoA as substrate. Particularly active with oleate as a substrate. Has no wax synthase activity to produce wax esters. The polypeptide is Diacylglycerol O-acyltransferase 2-like protein 6 (DGAT2L6) (Bos taurus (Bovine)).